Reading from the N-terminus, the 968-residue chain is Serine/threonine-protein kinase 10 (968 aa).

Residues Ser13 and Ser20 each carry the phosphoserine modification. In terms of domain architecture, Protein kinase spans 36–294 (WEIVGELGDG…AAQLLEHPFV (259 aa)). ATP-binding positions include 42 to 50 (LGDGAFGKV) and Lys65. Asp157 serves as the catalytic Proton acceptor. The interval 175–224 (DFGVSAKNLKTLQKRDSFIGTPYWMAPEVVMCETMKDTPYDYKADIWSLG) is activation segment. A Phosphoserine modification is found at Ser191. 2 stretches are compositionally biased toward polar residues: residues 337-351 (LENHTQNSSEVSPPS) and 361-393 (SPSTPLAPSQSQDSVNEPCSQPSGDRSLQTTSP). Disordered regions lie at residues 337-411 (LENH…VPLR) and 425-490 (AQEK…CSSL). Residues Ser438, Ser450, Ser454, Ser485, Ser514, and Ser549 each carry the phosphoserine modification. Over residues 441-457 (ANRSQKASQSRPNSSAL) the composition is skewed to polar residues. Positions 573–947 (QKEEHRNQTQ…FFKLSEEAEC (375 aa)) form a coiled coil. Disordered stretches follow at residues 668-690 (VEKLPRQQRKESMKQKMEEHTQK), 827-865 (INGGGSAAEQREKIKQFSQQEEKRQKSERLQQQQKHENQ), 910-929 (LKEWRDKLRPRKKALEEDLN), and 944-968 (EAECPNPSTPSKAAKFFPYSSADAS). Residues 835-865 (EQREKIKQFSQQEEKRQKSERLQQQQKHENQ) are compositionally biased toward basic and acidic residues. Thr952 carries the post-translational modification Phosphothreonine.

The protein belongs to the protein kinase superfamily. STE Ser/Thr protein kinase family. STE20 subfamily. In terms of assembly, homodimer; homodimerization is required for activation segment autophosphorylation. Autophosphorylates following homodimerization, leading to activation of the protein. In terms of tissue distribution, highly expressed in rapidly proliferating tissues (spleen, placenta, and peripheral blood leukocytes). Also expressed in brain, heart, skeletal muscle, colon, thymus, kidney, liver, small intestine and lung.

Its subcellular location is the cell membrane. It carries out the reaction L-seryl-[protein] + ATP = O-phospho-L-seryl-[protein] + ADP + H(+). The enzyme catalyses L-threonyl-[protein] + ATP = O-phospho-L-threonyl-[protein] + ADP + H(+). Its activity is regulated as follows. Inhibited by the pyrrole-indolinone inhibitor SU11274 (K00593): intercalates between the ATP-binding Lys-65 and alpha-C glutamate (Glu-81), resulting in a partial disordering of the lysine side chain. Also specifically inhibited by erlotinib. Slightly inhibited by gefitinib. Its function is as follows. Serine/threonine-protein kinase involved in regulation of lymphocyte migration. Phosphorylates MSN, and possibly PLK1. Involved in regulation of lymphocyte migration by mediating phosphorylation of ERM proteins such as MSN. Acts as a negative regulator of MAP3K1/MEKK1. May also act as a cell cycle regulator by acting as a polo kinase kinase: mediates phosphorylation of PLK1 in vitro; however such data require additional evidences in vivo. The sequence is that of Serine/threonine-protein kinase 10 (STK10) from Homo sapiens (Human).